A 260-amino-acid chain; its full sequence is Hydroxyethylthiazole kinase (260 aa).

Substrate is bound at residue Met-38. Positions 114 and 161 each coordinate ATP. Gly-188 contributes to the substrate binding site.

This sequence belongs to the Thz kinase family. Mg(2+) is required as a cofactor.

It carries out the reaction 5-(2-hydroxyethyl)-4-methylthiazole + ATP = 4-methyl-5-(2-phosphooxyethyl)-thiazole + ADP + H(+). It participates in cofactor biosynthesis; thiamine diphosphate biosynthesis; 4-methyl-5-(2-phosphoethyl)-thiazole from 5-(2-hydroxyethyl)-4-methylthiazole: step 1/1. In terms of biological role, catalyzes the phosphorylation of the hydroxyl group of 4-methyl-5-beta-hydroxyethylthiazole (THZ). The protein is Hydroxyethylthiazole kinase of Campylobacter lari (strain RM2100 / D67 / ATCC BAA-1060).